The chain runs to 113 residues: Nucleoid-associated protein Athe_1143 (113 aa).

It belongs to the YbaB/EbfC family. Homodimer.

Its subcellular location is the cytoplasm. It localises to the nucleoid. Functionally, binds to DNA and alters its conformation. May be involved in regulation of gene expression, nucleoid organization and DNA protection. The chain is Nucleoid-associated protein Athe_1143 from Caldicellulosiruptor bescii (strain ATCC BAA-1888 / DSM 6725 / KCTC 15123 / Z-1320) (Anaerocellum thermophilum).